The following is a 907-amino-acid chain: Putative pentatricopeptide repeat-containing protein At5g59900 (907 aa).

PPR repeat units lie at residues 103-137 (STAS…ALKP), 155-185 (SSSS…MITK), 191-225 (EVRT…GIRP), 226-260 (DVYI…GCDV), 261-295 (NIVP…DLKP), 296-330 (DVVT…RFSP), 331-365 (SEAA…GVSP), 366-400 (NLFV…GLRP), 401-435 (NDVT…GLKL), 436-470 (SVYP…KLEP), 471-505 (TVVT…GIAP), 506-540 (SIYT…NVKP), 541-575 (NRVT…GIVP), 576-610 (DTYS…NCEL), 611-645 (NEIC…GVDL), 646-680 (DLVC…GLKP), 681-715 (DDVI…GCVP), 716-750 (NEVT…SSVP), 751-782 (NQVT…ILKG), 786-820 (NTAT…GVSP), 821-855 (DCIT…GIRP), and 856-890 (DRVA…GLIP). Residues 887 to 907 (GLIPNNKTSRTTTSNDTSSKS) form a disordered region. Over residues 891-907 (NNKTSRTTTSNDTSSKS) the composition is skewed to low complexity.

Belongs to the PPR family. P subfamily.

The polypeptide is Putative pentatricopeptide repeat-containing protein At5g59900 (Arabidopsis thaliana (Mouse-ear cress)).